A 200-amino-acid polypeptide reads, in one-letter code: LexA repressor (200 aa).

The segment at residues Arg28–Lys48 is a DNA-binding region (H-T-H motif). Catalysis depends on for autocatalytic cleavage activity residues Ser118 and Lys155.

This sequence belongs to the peptidase S24 family. In terms of assembly, homodimer.

It carries out the reaction Hydrolysis of Ala-|-Gly bond in repressor LexA.. Its function is as follows. Represses a number of genes involved in the response to DNA damage (SOS response), including recA and lexA. In the presence of single-stranded DNA, RecA interacts with LexA causing an autocatalytic cleavage which disrupts the DNA-binding part of LexA, leading to derepression of the SOS regulon and eventually DNA repair. This Teredinibacter turnerae (strain ATCC 39867 / T7901) protein is LexA repressor.